The sequence spans 402 residues: BTB and MATH domain-containing protein 40 (402 aa).

The tract at residues 1–25 (MSDRHLYGSDHSYLSSKPSCSSCRR) is disordered. The span at 15–25 (SSKPSCSSCRR) shows a compositional bias: low complexity. The MATH domain maps to 43-177 (VLTQRWTVCN…DKSLVISCHI (135 aa)). In terms of domain architecture, BTB spans 222–295 (TDMTIVAGPL…IYAGVIKSDI (74 aa)).

As to quaternary structure, interacts with cul-3.

The protein operates within protein modification; protein ubiquitination. Probable substrate-specific adapter of an E3 ubiquitin-protein ligase complex which mediates the ubiquitination and subsequent proteasomal degradation of target proteins. The sequence is that of BTB and MATH domain-containing protein 40 (bath-40) from Caenorhabditis elegans.